The following is a 1178-amino-acid chain: Mediator of RNA polymerase II transcription subunit 14 (1178 aa).

The segment covering 1–12 has biased composition (polar residues); the sequence is MDNSVHNNSNTT. 2 disordered regions span residues 1–50 and 1064–1178; these read MDNS…PITV and LAGT…VVLD. Low complexity-rich tracts occupy residues 1074–1112 and 1119–1164; these read PTQI…QGAA and HQLQ…AQQR.

Belongs to the Mediator complex subunit 14 family. As to quaternary structure, component of the Mediator complex.

The protein localises to the nucleus. In terms of biological role, component of the Mediator complex, a coactivator involved in the regulated transcription of nearly all RNA polymerase II-dependent genes. Mediator functions as a bridge to convey information from gene-specific regulatory proteins to the basal RNA polymerase II transcription machinery. Mediator is recruited to promoters by direct interactions with regulatory proteins and serves as a scaffold for the assembly of a functional preinitiation complex with RNA polymerase II and the general transcription factors. The chain is Mediator of RNA polymerase II transcription subunit 14 (RGR1) from Chaetomium globosum (strain ATCC 6205 / CBS 148.51 / DSM 1962 / NBRC 6347 / NRRL 1970) (Soil fungus).